The primary structure comprises 389 residues: Tyrosine aminotransferase (389 aa).

K242 bears the N6-(pyridoxal phosphate)lysine mark.

It belongs to the class-I pyridoxal-phosphate-dependent aminotransferase family. Homodimer. The cofactor is pyridoxal 5'-phosphate.

It catalyses the reaction L-tyrosine + 2-oxoglutarate = 3-(4-hydroxyphenyl)pyruvate + L-glutamate. It participates in amino-acid degradation; L-phenylalanine degradation; acetoacetate and fumarate from L-phenylalanine: step 2/6. Functionally, transaminase involved in tyrosine breakdown. Converts tyrosine to p-hydroxyphenylpyruvate. The protein is Tyrosine aminotransferase (tatA) of Rhizobium meliloti (strain 1021) (Ensifer meliloti).